The primary structure comprises 195 residues: Probable GTP-binding protein EngB (195 aa).

Residues 24–195 (ELPEIALAGR…EAWDAILEKL (172 aa)) enclose the EngB-type G domain. Residues 32 to 39 (GRSNVGKS), 59 to 63 (GKTQL), 77 to 80 (DVPG), 144 to 147 (TKAD), and 176 to 178 (FSS) each bind GTP. 2 residues coordinate Mg(2+): S39 and T61.

This sequence belongs to the TRAFAC class TrmE-Era-EngA-EngB-Septin-like GTPase superfamily. EngB GTPase family. It depends on Mg(2+) as a cofactor.

Functionally, necessary for normal cell division and for the maintenance of normal septation. The chain is Probable GTP-binding protein EngB from Streptococcus pneumoniae (strain Hungary19A-6).